Consider the following 401-residue polypeptide: 3-sulfinopropanoyl-CoA desulfinase (401 aa).

Residues 121 to 124, S130, and 153 to 156 contribute to the FAD site; these read ICIS and YWIT. 243–244 is a substrate binding site; it reads YN. FAD is bound by residues R272, Q339, S343, 366 to 370, and Q387; that span reads GGTAQ.

It belongs to the acyl-CoA dehydrogenase family. As to quaternary structure, homotetramer. The cofactor is FAD.

The catalysed reaction is 3-sulfinopropanoyl-CoA + H2O = propanoyl-CoA + sulfite + H(+). In terms of biological role, catalyzes the conversion 3-sulfinopropanoyl-CoA (3SP-CoA) to propanoyl-CoA by abstraction of sulfite. Does not show dehydrogenase activity. Involved in the degradation of 3,3'-dithiodipropionate (DTDP), a sulfur-containing precursor substrate for biosynthesis of polythioesters (PTEs). This Advenella mimigardefordensis (strain DSM 17166 / LMG 22922 / DPN7) protein is 3-sulfinopropanoyl-CoA desulfinase.